Reading from the N-terminus, the 93-residue chain is Vacuolar ATPase assembly integral membrane protein VMA21 (93 aa).

Residues Met1–Ala21 lie on the Cytoplasmic side of the membrane. Residues Val22–Phe42 form a helical membrane-spanning segment. Over Ser43 to Thr54 the chain is Lumenal. A helical membrane pass occupies residues Phe55–Ala75. Residues Phe76–Ser93 are Cytoplasmic-facing. A Prevents secretion from ER motif is present at residues Lys90 to Ser93.

It belongs to the VMA21 family.

It is found in the endoplasmic reticulum membrane. The protein localises to the endoplasmic reticulum-Golgi intermediate compartment membrane. Its subcellular location is the cytoplasmic vesicle. The protein resides in the COPII-coated vesicle membrane. Required for the assembly of the V0 complex of the vacuolar ATPase (V-ATPase) in the endoplasmic reticulum. The protein is Vacuolar ATPase assembly integral membrane protein VMA21 of Cryptococcus neoformans var. neoformans serotype D (strain JEC21 / ATCC MYA-565) (Filobasidiella neoformans).